Reading from the N-terminus, the 142-residue chain is Small heat shock protein IbpB (142 aa).

Positions Ser-26–Arg-137 constitute a sHSP domain.

The protein belongs to the small heat shock protein (HSP20) family. In terms of assembly, homodimer. Forms homomultimers of about 100-150 subunits at optimal growth temperatures. Conformation changes to oligomers at high temperatures or high ionic concentrations. The decrease in size of the multimers is accompanied by an increase in chaperone activity.

It localises to the cytoplasm. In terms of biological role, associates with aggregated proteins, together with IbpA, to stabilize and protect them from irreversible denaturation and extensive proteolysis during heat shock and oxidative stress. Aggregated proteins bound to the IbpAB complex are more efficiently refolded and reactivated by the ATP-dependent chaperone systems ClpB and DnaK/DnaJ/GrpE. Its activity is ATP-independent. The protein is Small heat shock protein IbpB of Salmonella newport (strain SL254).